Reading from the N-terminus, the 326-residue chain is Putative F-box protein At3g22710 (326 aa).

The region spanning 1 to 50 is the F-box domain; the sequence is MTMPDLPPDLVEEILSRVPATSVKKLRSTCTQWNAIFKDERFTEKHFSKA.

This is Putative F-box protein At3g22710 from Arabidopsis thaliana (Mouse-ear cress).